The sequence spans 696 residues: Neurogenic protein big brain (696 aa).

Over 1 to 71 the chain is Cytoplasmic; it reads MADESLHTVP…LEFWRSIISE (71 aa). At serine 46 the chain carries Phosphoserine. Residue threonine 47 is modified to Phosphothreonine. Residues 72 to 93 traverse the membrane as a helical segment; it reads CLASFMYVFIVCGAAAGVGVGA. The Extracellular segment spans residues 94 to 97; the sequence is SVSS. A helical membrane pass occupies residues 98 to 118; the sequence is VLLATALASGLAMATLTQCFL. The Cytoplasmic segment spans residues 119 to 143; the sequence is HISGAHINPAVTLALCVVRSISPIR. The short motif at 126 to 128 is the NPA 1 element; that stretch reads NPA. The chain crosses the membrane as a helical span at residues 144-167; the sequence is AAMYITAQCGGGIAGAALLYGVTV. The Extracellular segment spans residues 168-189; that stretch reads PGYQGNLQAAISHSAALAAWER. The chain crosses the membrane as a helical span at residues 190-208; it reads FGVEFILTFLVVLCYFVST. The Cytoplasmic portion of the chain corresponds to 209–213; sequence DPMKK. The chain crosses the membrane as a helical span at residues 214-234; that stretch reads FMGNSAASIGCAYSACCFVSM. At 235 to 256 the chain is on the extracellular side; that stretch reads PYLNPARSLGPSFVLNKWDSHW. Residues 238 to 240 carry the NPA 2 motif; the sequence is NPA. The chain crosses the membrane as a helical span at residues 257–273; sequence VYWFGPLVGGMASGLVY. Residue tyrosine 273 is modified to Phosphotyrosine; by Src. Residues 274 to 696 are Cytoplasmic-facing; that stretch reads EYIFNSRNRN…HYGMLPLRPN (423 aa). Serine 300 carries the phosphoserine modification. The interval 314 to 345 is disordered; the sequence is NKYQQSQGTYPRGQSNGNGGGQAAGNGQHQAA. Position 367 is a phosphotyrosine; by Abl (tyrosine 367). At tyrosine 384 the chain carries Phosphotyrosine; by Src. A Phosphoserine modification is found at serine 394. Disordered regions lie at residues 436-634 and 650-696; these read MRTQ…KVSA and TSQG…LRPN. Low complexity-rich tracts occupy residues 439–451 and 462–472; these read QQQQQQQQQQQQQ and QNQNVQNQMQQ. Position 478 is a phosphotyrosine; by Src (tyrosine 478). Residues 487–532 are compositionally biased toward low complexity; sequence QQQPIQQQQQQQQQQQLQQQQPNMGVQQQQMQPPPQMMSDPQQQPQ. A compositionally biased stretch (basic and acidic residues) spans 549–558; that stretch reads GNHKYDRRDP. Phosphoserine is present on serine 576. Positions 576–587 are enriched in low complexity; it reads SDDSSYGSYHGS. The segment covering 599-616 has biased composition (pro residues); that stretch reads EPSPPPPPMLMYAPPPQP. Tyrosine 610 carries the post-translational modification Phosphotyrosine; by Abl. The segment covering 659-686 has biased composition (low complexity); it reads QQQQQQQQQQQQQQQQQQQQMMMQQQQQ.

This sequence belongs to the MIP/aquaporin (TC 1.A.8) family. Post-translationally, phosphorylated at its C-terminus. As to expression, detected in all tissues with neurogenic abilities, for example the neurogenic ectoderm.

Its subcellular location is the membrane. Functionally, essential for proper differentiation of ectoderm. Acts synergistically with neurogenic locus proteins Notch and Delta during the separation of neural and epidermal cell lineages in response to the lateral inhibition signal. Voltage-insensitive monovalent cation channel. Ion transport is blocked by the presence of divalent cations. The chain is Neurogenic protein big brain (bib) from Drosophila melanogaster (Fruit fly).